Reading from the N-terminus, the 295-residue chain is Phosphatidylserine decarboxylase proenzyme (295 aa).

Catalysis depends on charge relay system; for autoendoproteolytic cleavage activity residues aspartate 113, histidine 169, and serine 256. Serine 256 (schiff-base intermediate with substrate; via pyruvic acid; for decarboxylase activity) is an active-site residue. Serine 256 bears the Pyruvic acid (Ser); by autocatalysis mark.

The protein belongs to the phosphatidylserine decarboxylase family. PSD-B subfamily. Prokaryotic type II sub-subfamily. As to quaternary structure, heterodimer of a large membrane-associated beta subunit and a small pyruvoyl-containing alpha subunit. Requires pyruvate as cofactor. Is synthesized initially as an inactive proenzyme. Formation of the active enzyme involves a self-maturation process in which the active site pyruvoyl group is generated from an internal serine residue via an autocatalytic post-translational modification. Two non-identical subunits are generated from the proenzyme in this reaction, and the pyruvate is formed at the N-terminus of the alpha chain, which is derived from the carboxyl end of the proenzyme. The autoendoproteolytic cleavage occurs by a canonical serine protease mechanism, in which the side chain hydroxyl group of the serine supplies its oxygen atom to form the C-terminus of the beta chain, while the remainder of the serine residue undergoes an oxidative deamination to produce ammonia and the pyruvoyl prosthetic group on the alpha chain. During this reaction, the Ser that is part of the protease active site of the proenzyme becomes the pyruvoyl prosthetic group, which constitutes an essential element of the active site of the mature decarboxylase.

It is found in the cell membrane. The catalysed reaction is a 1,2-diacyl-sn-glycero-3-phospho-L-serine + H(+) = a 1,2-diacyl-sn-glycero-3-phosphoethanolamine + CO2. Its pathway is phospholipid metabolism; phosphatidylethanolamine biosynthesis; phosphatidylethanolamine from CDP-diacylglycerol: step 2/2. Its function is as follows. Catalyzes the formation of phosphatidylethanolamine (PtdEtn) from phosphatidylserine (PtdSer). This Clostridium botulinum (strain Langeland / NCTC 10281 / Type F) protein is Phosphatidylserine decarboxylase proenzyme.